A 220-amino-acid chain; its full sequence is Deoxyribose-phosphate aldolase (220 aa).

Asp-92 serves as the catalytic Proton donor/acceptor. Catalysis depends on Lys-155, which acts as the Schiff-base intermediate with acetaldehyde. Catalysis depends on Lys-184, which acts as the Proton donor/acceptor.

The protein belongs to the DeoC/FbaB aldolase family. DeoC type 1 subfamily.

The protein localises to the cytoplasm. The enzyme catalyses 2-deoxy-D-ribose 5-phosphate = D-glyceraldehyde 3-phosphate + acetaldehyde. The protein operates within carbohydrate degradation; 2-deoxy-D-ribose 1-phosphate degradation; D-glyceraldehyde 3-phosphate and acetaldehyde from 2-deoxy-alpha-D-ribose 1-phosphate: step 2/2. Catalyzes a reversible aldol reaction between acetaldehyde and D-glyceraldehyde 3-phosphate to generate 2-deoxy-D-ribose 5-phosphate. This Natranaerobius thermophilus (strain ATCC BAA-1301 / DSM 18059 / JW/NM-WN-LF) protein is Deoxyribose-phosphate aldolase.